A 247-amino-acid polypeptide reads, in one-letter code: Protein lin-28 homolog B (247 aa).

The segment at 1 to 22 (MAEGGASKGEEPEKLPGLAEDE) is disordered. Residues 27 to 100 (HGTGHCKWFN…GLESIRVTGP (74 aa)) enclose the CSD domain. 3 positions are modified to phosphoserine: Ser-94, Ser-103, and Ser-108. The disordered stretch occupies residues 96-124 (RVTGPGGSPCLGSERRPKGKTLQKRKPKG). Residues 112-123 (PKGKTLQKRKPK) show a composition bias toward basic residues. 2 consecutive CCHC-type zinc fingers follow at residues 125-142 (DRCYNCGGLDHHAKECSL) and 147-164 (KKCHYCQSIMHMVANCPH). Zn(2+)-binding residues include Cys-127, Cys-130, His-135, Cys-140, Cys-149, Cys-152, His-157, and Cys-162. Residues 173-186 (SSQGRQEAESQPCS) show a composition bias toward polar residues. Residues 173-247 (SSQGRQEAES…GPLIQKRKKT (75 aa)) form a disordered region. The span at 207–219 (VKSEMAEHSDRSP) shows a compositional bias: basic and acidic residues.

It belongs to the lin-28 family.

It is found in the nucleus. The protein localises to the nucleolus. Functionally, suppressor of microRNA (miRNA) biogenesis, including that of let-7 and possibly of miR107, miR-143 and miR-200c. Binds primary let-7 transcripts (pri-let-7), including pri-let-7g and pri-let-7a-1, and sequester them in the nucleolus, away from the microprocessor complex, hence preventing their processing into mature miRNA. Does not act on pri-miR21. The repression of let-7 expression is required for normal development and contributes to maintain the pluripotent state of embryonic stem cells by preventing let-7-mediated differentiation. When overexpressed, recruits ZCCHC11/TUT4 uridylyltransferase to pre-let-7 transcripts, leading to their terminal uridylation and degradation. This activity might not be relevant in vivo, as LIN28B-mediated inhibition of let-7 miRNA maturation appears to be ZCCHC11-independent. Interaction with target pre-miRNAs occurs via an 5'-GGAG-3' motif in the pre-miRNA terminal loop. Mediates MYC-induced let-7 repression. When overexpressed, may stimulate growth of carcinoma cell lines. The chain is Protein lin-28 homolog B (Lin28b) from Mus musculus (Mouse).